We begin with the raw amino-acid sequence, 283 residues long: Elongation factor Ts (283 aa).

An involved in Mg(2+) ion dislocation from EF-Tu region spans residues T80–V83.

Belongs to the EF-Ts family.

The protein resides in the cytoplasm. Its function is as follows. Associates with the EF-Tu.GDP complex and induces the exchange of GDP to GTP. It remains bound to the aminoacyl-tRNA.EF-Tu.GTP complex up to the GTP hydrolysis stage on the ribosome. This Shigella boydii serotype 18 (strain CDC 3083-94 / BS512) protein is Elongation factor Ts.